Reading from the N-terminus, the 181-residue chain is Oligoribonuclease (181 aa).

Positions 8 to 171 (LIWIDLEMTG…DDIRESVAEL (164 aa)) constitute an Exonuclease domain. Residue Tyr-129 is part of the active site.

This sequence belongs to the oligoribonuclease family. Homodimer.

The protein localises to the cytoplasm. In terms of biological role, 3'-to-5' exoribonuclease specific for small oligoribonucleotides. This is Oligoribonuclease from Escherichia coli O139:H28 (strain E24377A / ETEC).